A 116-amino-acid chain; its full sequence is Large ribosomal subunit protein bL19 (116 aa).

Belongs to the bacterial ribosomal protein bL19 family.

Its function is as follows. This protein is located at the 30S-50S ribosomal subunit interface and may play a role in the structure and function of the aminoacyl-tRNA binding site. This Haemophilus influenzae (strain 86-028NP) protein is Large ribosomal subunit protein bL19.